The chain runs to 68 residues: Large ribosomal subunit protein uL29 (68 aa).

Belongs to the universal ribosomal protein uL29 family.

The protein is Large ribosomal subunit protein uL29 of Rhodopseudomonas palustris (strain BisA53).